We begin with the raw amino-acid sequence, 279 residues long: Tryptophan synthase alpha chain (279 aa).

Active-site proton acceptor residues include E50 and D61.

The protein belongs to the TrpA family. In terms of assembly, tetramer of two alpha and two beta chains.

It catalyses the reaction (1S,2R)-1-C-(indol-3-yl)glycerol 3-phosphate + L-serine = D-glyceraldehyde 3-phosphate + L-tryptophan + H2O. The protein operates within amino-acid biosynthesis; L-tryptophan biosynthesis; L-tryptophan from chorismate: step 5/5. Its function is as follows. The alpha subunit is responsible for the aldol cleavage of indoleglycerol phosphate to indole and glyceraldehyde 3-phosphate. This chain is Tryptophan synthase alpha chain, found in Brucella melitensis biotype 2 (strain ATCC 23457).